A 75-amino-acid chain; its full sequence is MNFATKIVILLLVAALILAVTSEKGDSSSDDNEAKETEGELPLSDFYGSCVRPKKCKPHLKCNAAQICVFPKTGR.

Positions 1 to 19 (MNFATKIVILLLVAALILA) are cleaved as a signal peptide. Disulfide bonds link Cys50–Cys62 and Cys56–Cys68.

As to expression, expressed by the venom gland.

The protein localises to the secreted. In terms of biological role, insecticidal toxin. The polypeptide is Insecticidal toxin OcyC10 (Opisthacanthus cayaporum (South American scorpion)).